A 286-amino-acid polypeptide reads, in one-letter code: MADNPLWHETLHDHFGQYFSVDNVLYHEKTDHQDLIIFDNRAFGRVMALDGVVQTTERDEFIYHEMMTHVPLLAHGNAKHVLIIGGGDGAMLREVSRHRSIETITMVEIDAGVVSFCRQYLPNHSAGAYDDPRFTLVIDDGVNFVNQTTQTFDVIISDCTDPIGPGESLFTSAFYEGCKRCLNPGGVFVAQNGVCFLQQDEAVGSHRKLSHYFRDVSFYQAAIPTYYGGIMTFAWASDNEALRHLSSEIIQARFHKANLTCRYYNPAIHTAAFALPQYLHDALSAP.

Residues 5 to 238 form the PABS domain; the sequence is PLWHETLHDH…GIMTFAWASD (234 aa). Residue glutamine 33 participates in S-methyl-5'-thioadenosine binding. 2 residues coordinate spermidine: histidine 64 and aspartate 88. S-methyl-5'-thioadenosine contacts are provided by residues glutamate 108 and 140-141; that span reads DG. Catalysis depends on aspartate 158, which acts as the Proton acceptor. A spermidine-binding site is contributed by 158–161; the sequence is DCTD. Proline 165 provides a ligand contact to S-methyl-5'-thioadenosine.

It belongs to the spermidine/spermine synthase family. In terms of assembly, homodimer or homotetramer.

It localises to the cytoplasm. It catalyses the reaction S-adenosyl 3-(methylsulfanyl)propylamine + putrescine = S-methyl-5'-thioadenosine + spermidine + H(+). It participates in amine and polyamine biosynthesis; spermidine biosynthesis; spermidine from putrescine: step 1/1. Its function is as follows. Catalyzes the irreversible transfer of a propylamine group from the amino donor S-adenosylmethioninamine (decarboxy-AdoMet) to putrescine (1,4-diaminobutane) to yield spermidine. The sequence is that of Polyamine aminopropyltransferase from Klebsiella pneumoniae (strain 342).